Here is a 128-residue protein sequence, read N- to C-terminus: Ribosome-binding factor A (128 aa).

It belongs to the RbfA family. Monomer. Binds 30S ribosomal subunits, but not 50S ribosomal subunits or 70S ribosomes.

Its subcellular location is the cytoplasm. One of several proteins that assist in the late maturation steps of the functional core of the 30S ribosomal subunit. Associates with free 30S ribosomal subunits (but not with 30S subunits that are part of 70S ribosomes or polysomes). Required for efficient processing of 16S rRNA. May interact with the 5'-terminal helix region of 16S rRNA. The chain is Ribosome-binding factor A from Haemophilus influenzae (strain ATCC 51907 / DSM 11121 / KW20 / Rd).